The following is a 188-amino-acid chain: Proline-rich protein 3 (188 aa).

A disordered region spans residues 1-157 (MPKRKKQNHH…DPQVMEDKSD (157 aa)). Composition is skewed to pro residues over residues 35–46 (IGPPSLLGPPPM) and 69–82 (LIPPLLSLPPPPWG). Residues 83–96 (RGPIRRGLGPRSSP) are compositionally biased toward low complexity. The segment covering 145–157 (PKDDPQVMEDKSD) has biased composition (basic and acidic residues). Residues 155-183 (KSDRPVCRHFAKKGHCRYEDLCAFYHPGV) form a C3H1-type zinc finger.

The sequence is that of Proline-rich protein 3 (PRR3) from Homo sapiens (Human).